We begin with the raw amino-acid sequence, 368 residues long: DNA-dependent metalloprotease dvc-1 (368 aa).

In terms of domain architecture, SprT-like spans 21-190 (HALFIQFDAR…QSCGGNFLKV (170 aa)). His89 is a Zn(2+) binding site. Glu90 is a catalytic residue. Residues His93 and His108 each coordinate Zn(2+). Residues 187–309 (FLKVKEPEGY…PVNFTSPSSA (123 aa)) are disordered. Residues 226–237 (TLDDFFKKDGKN) show a composition bias toward basic and acidic residues. Over residues 238 to 274 (SSDNSTSKSPTKPSTSLFTGSGQKLGGSSSTSSLLNS) the composition is skewed to low complexity. The segment at 344-368 (SVICPSCNTEVMENLIHGHLDYCLG) adopts a UBZ4-type zinc-finger fold. The Zn(2+) site is built by Cys347, Cys350, His362, and Cys366.

The protein belongs to the Spartan family. In terms of assembly, interacts with vcp/p97 (cdc-48.1 or cdc-48.2).

The protein localises to the nucleus. It is found in the chromosome. Its function is as follows. DNA-dependent metalloendopeptidase that mediates the proteolytic cleavage of covalent DNA-protein cross-links (DPCs) during DNA synthesis, thereby playing a key role in maintaining genomic integrity. DPCs are highly toxic DNA lesions that interfere with essential chromatin transactions, such as replication and transcription, and which are induced by reactive agents, such as UV light or formaldehyde. Associates with the DNA replication machinery and specifically removes DPCs during DNA synthesis. Regulator of UV-induced DNA damage response: required to protect genome stability during DNA replication, possibly via recruitment of vcp/p97 (cdc-48.1 or cdc-48.2) recruitment. The polypeptide is DNA-dependent metalloprotease dvc-1 (Caenorhabditis elegans).